The primary structure comprises 273 residues: Dermonecrotic toxin LhSicTox-alphaIA2aviii (273 aa).

The active site involves histidine 5. Mg(2+)-binding residues include glutamate 25 and aspartate 27. Catalysis depends on histidine 41, which acts as the Nucleophile. Intrachain disulfides connect cysteine 45–cysteine 51 and cysteine 47–cysteine 190. Aspartate 85 contributes to the Mg(2+) binding site.

Belongs to the arthropod phospholipase D family. Class II subfamily. Mg(2+) serves as cofactor. In terms of tissue distribution, expressed by the venom gland.

It is found in the secreted. It catalyses the reaction an N-(acyl)-sphingosylphosphocholine = an N-(acyl)-sphingosyl-1,3-cyclic phosphate + choline. The catalysed reaction is an N-(acyl)-sphingosylphosphoethanolamine = an N-(acyl)-sphingosyl-1,3-cyclic phosphate + ethanolamine. It carries out the reaction a 1-acyl-sn-glycero-3-phosphocholine = a 1-acyl-sn-glycero-2,3-cyclic phosphate + choline. The enzyme catalyses a 1-acyl-sn-glycero-3-phosphoethanolamine = a 1-acyl-sn-glycero-2,3-cyclic phosphate + ethanolamine. Dermonecrotic toxins cleave the phosphodiester linkage between the phosphate and headgroup of certain phospholipids (sphingolipid and lysolipid substrates), forming an alcohol (often choline) and a cyclic phosphate. This toxin acts on sphingomyelin (SM). It may also act on ceramide phosphoethanolamine (CPE), lysophosphatidylcholine (LPC) and lysophosphatidylethanolamine (LPE), but not on lysophosphatidylserine (LPS), and lysophosphatidylglycerol (LPG). It acts by transphosphatidylation, releasing exclusively cyclic phosphate products as second products. Induces dermonecrosis, hemolysis, increased vascular permeability, edema, inflammatory response, and platelet aggregation. The chain is Dermonecrotic toxin LhSicTox-alphaIA2aviii from Loxosceles hirsuta (Recluse spider).